A 155-amino-acid polypeptide reads, in one-letter code: 6,7-dimethyl-8-ribityllumazine synthase (155 aa).

5-amino-6-(D-ribitylamino)uracil-binding positions include W22, S56–E58, and A80–I82. D85–T86 provides a ligand contact to (2S)-2-hydroxy-3-oxobutyl phosphate. Catalysis depends on H88, which acts as the Proton donor. Position 113 (F113) interacts with 5-amino-6-(D-ribitylamino)uracil. Residue R127 coordinates (2S)-2-hydroxy-3-oxobutyl phosphate.

Belongs to the DMRL synthase family.

It carries out the reaction (2S)-2-hydroxy-3-oxobutyl phosphate + 5-amino-6-(D-ribitylamino)uracil = 6,7-dimethyl-8-(1-D-ribityl)lumazine + phosphate + 2 H2O + H(+). The protein operates within cofactor biosynthesis; riboflavin biosynthesis; riboflavin from 2-hydroxy-3-oxobutyl phosphate and 5-amino-6-(D-ribitylamino)uracil: step 1/2. Catalyzes the formation of 6,7-dimethyl-8-ribityllumazine by condensation of 5-amino-6-(D-ribitylamino)uracil with 3,4-dihydroxy-2-butanone 4-phosphate. This is the penultimate step in the biosynthesis of riboflavin. In Deinococcus radiodurans (strain ATCC 13939 / DSM 20539 / JCM 16871 / CCUG 27074 / LMG 4051 / NBRC 15346 / NCIMB 9279 / VKM B-1422 / R1), this protein is 6,7-dimethyl-8-ribityllumazine synthase.